Here is a 368-residue protein sequence, read N- to C-terminus: Chorismate synthase (368 aa).

NADP(+)-binding residues include Arg-48 and Arg-54. Residues Arg-125–Ser-127, Asn-238–Ala-239, Gly-278, Lys-293–Ser-297, and Arg-319 each bind FMN.

It belongs to the chorismate synthase family. In terms of assembly, homotetramer. The cofactor is FMNH2.

It carries out the reaction 5-O-(1-carboxyvinyl)-3-phosphoshikimate = chorismate + phosphate. Its pathway is metabolic intermediate biosynthesis; chorismate biosynthesis; chorismate from D-erythrose 4-phosphate and phosphoenolpyruvate: step 7/7. Its function is as follows. Catalyzes the anti-1,4-elimination of the C-3 phosphate and the C-6 proR hydrogen from 5-enolpyruvylshikimate-3-phosphate (EPSP) to yield chorismate, which is the branch point compound that serves as the starting substrate for the three terminal pathways of aromatic amino acid biosynthesis. This reaction introduces a second double bond into the aromatic ring system. This chain is Chorismate synthase, found in Methylibium petroleiphilum (strain ATCC BAA-1232 / LMG 22953 / PM1).